Reading from the N-terminus, the 660-residue chain is Putative ABC transporter ATP-binding MG390 homolog (660 aa).

In terms of domain architecture, Peptidase C39 spans 6 to 126; the sequence is QEQPNECGIC…KQWTGYAATV (121 aa). Cys-12 is an active-site residue. 6 helical membrane-spanning segments follow: residues 150-170, 188-208, 265-285, 290-310, 379-399, and 402-422; these read LIIFYVFIELIIIGISTLLAT, IVVFVVFFLVLKGLYLLLYAL, HIPNLIISCTVALIIGTLIGI, FLWIAIVQIVVNCAIFLYDFF, SFAQQVFDFLILALGIIGIIE, and YTLAFLFYIFSIQALFSAYAT. The ABC transporter domain maps to 464–660; that stretch reads INLNNCSITL…INLSPYLQQT (197 aa). 494 to 501 serves as a coordination point for ATP; sequence GENGSGKS.

It belongs to the ABC transporter superfamily.

It is found in the cell membrane. In Mycoplasma pneumoniae (strain ATCC 29342 / M129 / Subtype 1) (Mycoplasmoides pneumoniae), this protein is Putative ABC transporter ATP-binding MG390 homolog.